Consider the following 327-residue polypeptide: Glutaminase (327 aa).

Serine 92, asparagine 143, asparagine 195, tyrosine 218, tyrosine 263, and valine 281 together coordinate substrate.

The protein belongs to the glutaminase family. Homotetramer.

It carries out the reaction L-glutamine + H2O = L-glutamate + NH4(+). This is Glutaminase from Synechocystis sp. (strain ATCC 27184 / PCC 6803 / Kazusa).